Reading from the N-terminus, the 299-residue chain is Recombination-associated protein RdgC (299 aa).

It belongs to the RdgC family.

It is found in the cytoplasm. Its subcellular location is the nucleoid. May be involved in recombination. The chain is Recombination-associated protein RdgC from Neisseria meningitidis serogroup A / serotype 4A (strain DSM 15465 / Z2491).